The primary structure comprises 256 residues: Thiazole synthase (256 aa).

Residue Lys95 is the Schiff-base intermediate with DXP of the active site. 1-deoxy-D-xylulose 5-phosphate is bound by residues Gly156, 182–183, and 204–205; these read AG and NT.

It belongs to the ThiG family. In terms of assembly, homotetramer. Forms heterodimers with either ThiH or ThiS.

The protein resides in the cytoplasm. It catalyses the reaction [ThiS sulfur-carrier protein]-C-terminal-Gly-aminoethanethioate + 2-iminoacetate + 1-deoxy-D-xylulose 5-phosphate = [ThiS sulfur-carrier protein]-C-terminal Gly-Gly + 2-[(2R,5Z)-2-carboxy-4-methylthiazol-5(2H)-ylidene]ethyl phosphate + 2 H2O + H(+). The protein operates within cofactor biosynthesis; thiamine diphosphate biosynthesis. In terms of biological role, catalyzes the rearrangement of 1-deoxy-D-xylulose 5-phosphate (DXP) to produce the thiazole phosphate moiety of thiamine. Sulfur is provided by the thiocarboxylate moiety of the carrier protein ThiS. In vitro, sulfur can be provided by H(2)S. The protein is Thiazole synthase of Escherichia coli O127:H6 (strain E2348/69 / EPEC).